A 112-amino-acid chain; its full sequence is Large ribosomal subunit protein uL18 (112 aa).

Belongs to the universal ribosomal protein uL18 family. Part of the 50S ribosomal subunit; part of the 5S rRNA/L5/L18/L25 subcomplex. Contacts the 5S and 23S rRNAs.

This is one of the proteins that bind and probably mediate the attachment of the 5S RNA into the large ribosomal subunit, where it forms part of the central protuberance. The sequence is that of Large ribosomal subunit protein uL18 from Deinococcus deserti (strain DSM 17065 / CIP 109153 / LMG 22923 / VCD115).